A 388-amino-acid chain; its full sequence is Dual-specificity RNA methyltransferase RlmN (388 aa).

The active-site Proton acceptor is glutamate 109. The Radical SAM core domain maps to 115 to 354 (EDDRATLCVS…TIVRKTRGDD (240 aa)). A disulfide bond links cysteine 122 and cysteine 359. [4Fe-4S] cluster contacts are provided by cysteine 129, cysteine 133, and cysteine 136. Residues 183–184 (GE), serine 215, 237–239 (SLH), and asparagine 316 contribute to the S-adenosyl-L-methionine site. Cysteine 359 (S-methylcysteine intermediate) is an active-site residue.

Belongs to the radical SAM superfamily. RlmN family. It depends on [4Fe-4S] cluster as a cofactor.

It is found in the cytoplasm. It carries out the reaction adenosine(2503) in 23S rRNA + 2 reduced [2Fe-2S]-[ferredoxin] + 2 S-adenosyl-L-methionine = 2-methyladenosine(2503) in 23S rRNA + 5'-deoxyadenosine + L-methionine + 2 oxidized [2Fe-2S]-[ferredoxin] + S-adenosyl-L-homocysteine. The enzyme catalyses adenosine(37) in tRNA + 2 reduced [2Fe-2S]-[ferredoxin] + 2 S-adenosyl-L-methionine = 2-methyladenosine(37) in tRNA + 5'-deoxyadenosine + L-methionine + 2 oxidized [2Fe-2S]-[ferredoxin] + S-adenosyl-L-homocysteine. In terms of biological role, specifically methylates position 2 of adenine 2503 in 23S rRNA and position 2 of adenine 37 in tRNAs. m2A2503 modification seems to play a crucial role in the proofreading step occurring at the peptidyl transferase center and thus would serve to optimize ribosomal fidelity. In Salmonella typhi, this protein is Dual-specificity RNA methyltransferase RlmN.